The following is a 294-amino-acid chain: NAD kinase (294 aa).

The active-site Proton acceptor is the Asp-74. Residues 74 to 75, 148 to 149, Arg-159, Arg-176, Asp-178, 189 to 194, and Gln-247 contribute to the NAD(+) site; these read DG, ND, and TAYALS.

It belongs to the NAD kinase family. It depends on a divalent metal cation as a cofactor.

Its subcellular location is the cytoplasm. It catalyses the reaction NAD(+) + ATP = ADP + NADP(+) + H(+). Functionally, involved in the regulation of the intracellular balance of NAD and NADP, and is a key enzyme in the biosynthesis of NADP. Catalyzes specifically the phosphorylation on 2'-hydroxyl of the adenosine moiety of NAD to yield NADP. This Azoarcus sp. (strain BH72) protein is NAD kinase.